Here is a 100-residue protein sequence, read N- to C-terminus: Integration host factor subunit alpha (100 aa).

The tract at residues 53 to 73 (FDLRDKRQRPGRNPKTGEEIP) is disordered.

It belongs to the bacterial histone-like protein family. Heterodimer of an alpha and a beta chain.

This protein is one of the two subunits of integration host factor, a specific DNA-binding protein that functions in genetic recombination as well as in transcriptional and translational control. The sequence is that of Integration host factor subunit alpha from Pseudomonas aeruginosa (strain LESB58).